A 238-amino-acid polypeptide reads, in one-letter code: tRNA (guanine-N(1)-)-methyltransferase (238 aa).

Position 132–137 (132–137 (IGDYVL)) interacts with S-adenosyl-L-methionine.

It belongs to the RNA methyltransferase TrmD family. As to quaternary structure, homodimer.

Its subcellular location is the cytoplasm. It carries out the reaction guanosine(37) in tRNA + S-adenosyl-L-methionine = N(1)-methylguanosine(37) in tRNA + S-adenosyl-L-homocysteine + H(+). Its function is as follows. Specifically methylates guanosine-37 in various tRNAs. This is tRNA (guanine-N(1)-)-methyltransferase from Nitrobacter hamburgensis (strain DSM 10229 / NCIMB 13809 / X14).